The chain runs to 428 residues: Serine--tRNA ligase (428 aa).

235–237 (TAE) serves as a coordination point for L-serine. ATP is bound at residue 266 to 268 (RSE). Residue Glu-289 coordinates L-serine. 353–356 (EISS) serves as a coordination point for ATP. Ser-389 is an L-serine binding site.

The protein belongs to the class-II aminoacyl-tRNA synthetase family. Type-1 seryl-tRNA synthetase subfamily. In terms of assembly, homodimer. The tRNA molecule binds across the dimer.

Its subcellular location is the cytoplasm. The enzyme catalyses tRNA(Ser) + L-serine + ATP = L-seryl-tRNA(Ser) + AMP + diphosphate + H(+). The catalysed reaction is tRNA(Sec) + L-serine + ATP = L-seryl-tRNA(Sec) + AMP + diphosphate + H(+). Its pathway is aminoacyl-tRNA biosynthesis; selenocysteinyl-tRNA(Sec) biosynthesis; L-seryl-tRNA(Sec) from L-serine and tRNA(Sec): step 1/1. Functionally, catalyzes the attachment of serine to tRNA(Ser). Is also able to aminoacylate tRNA(Sec) with serine, to form the misacylated tRNA L-seryl-tRNA(Sec), which will be further converted into selenocysteinyl-tRNA(Sec). This chain is Serine--tRNA ligase, found in Psychromonas ingrahamii (strain DSM 17664 / CCUG 51855 / 37).